The chain runs to 457 residues: Protein translocase subunit SecY (457 aa).

Over 1–20 the chain is Cytoplasmic; the sequence is MGVIDVLAAVGERFPAVRKP. Residues 21–47 traverse the membrane as a helical segment; that stretch reads ERKPTLYRRLAWTGVILVLYFIMSNIP. Residues 48 to 59 are Extracellular-facing; sequence LYGIPPQNIGGQ. Residues 60 to 67 constitute an intramembrane region (helical); the sequence is VDLQRIIF. A discontinuously helical transmembrane segment spans residues 60 to 88; it reads VDLQRIIFASSAGTLMELGIGPIVTASLI. The stretch at 68–79 is an intramembrane region; sequence ASSAGTLMELGI. Positions 80-88 form an intramembrane region, helical; the sequence is GPIVTASLI. The Cytoplasmic portion of the chain corresponds to 89–109; the sequence is IQVLVGAKIIKLDLADPEGRR. Residues 110–134 form a helical membrane-spanning segment; that stretch reads KFTSAQKVLALAFAALEAVAFTVGG. Residues 135–146 lie on the Extracellular side of the membrane; that stretch reads RYWVGTAIEPGP. A helical membrane pass occupies residues 147–171; that stretch reads LDYALVSLQLFLGALLVIYFDEVMQ. The Cytoplasmic portion of the chain corresponds to 172–178; the sequence is KGWGIGS. The helical transmembrane segment at 179–197 threads the bilayer; that stretch reads AISLFILAGVAQGVVWSIF. Residues 198-229 lie on the Extracellular side of the membrane; it reads GTIPGVAQDYGLVPAIISNPDLTLLARPNGFP. Residues 230–251 form a helical membrane-spanning segment; that stretch reads DLTGFFTTLAAIILLVYLQAMR. Topologically, residues 252 to 276 are cytoplasmic; the sequence is VEIPITSERFKGIRSRVPLQFIYVT. Residues 277–298 form a helical membrane-spanning segment; that stretch reads NIPILLVGILVSDLLLVQRLLA. Over 299–332 the chain is Extracellular; sequence DYLGVESRAYQIYSSIVYYLSPPRGVVQSIADPV. Residues 333–352 traverse the membrane as a helical segment; sequence KTAVFIASWTVLSIVFGYMW. The Cytoplasmic portion of the chain corresponds to 353-395; it reads VEIAGLNPREQAERLIKGGLAIPGMRSDPRVLERVLRRYIYPL. A helical transmembrane segment spans residues 396-414; it reads TFLSSLIVAALVIVADIFG. The Extracellular portion of the chain corresponds to 415–417; it reads AYG. The helical transmembrane segment at 418 to 432 threads the bilayer; it reads TGTGLLLAVGIINQY. The Cytoplasmic portion of the chain corresponds to 433–457; sequence YAMITRERALETYPLLRRILGEEVV.

This sequence belongs to the SecY/SEC61-alpha family. In terms of assembly, component of the Sec protein translocase complex. Heterotrimer consisting of alpha (SecY), beta (SecG) and gamma (SecE) subunits. The heterotrimers can form oligomers, although 1 heterotrimer is thought to be able to translocate proteins. Interacts with the ribosome. May interact with SecDF, and other proteins may be involved.

The protein localises to the cell membrane. Its function is as follows. The central subunit of the protein translocation channel SecYEG. Consists of two halves formed by TMs 1-5 and 6-10. These two domains form a lateral gate at the front which open onto the bilayer between TMs 2 and 7, and are clamped together by SecE at the back. The channel is closed by both a pore ring composed of hydrophobic SecY resides and a short helix (helix 2A) on the extracellular side of the membrane which forms a plug. The plug probably moves laterally to allow the channel to open. The ring and the pore may move independently. This Aeropyrum pernix (strain ATCC 700893 / DSM 11879 / JCM 9820 / NBRC 100138 / K1) protein is Protein translocase subunit SecY.